Here is a 265-residue protein sequence, read N- to C-terminus: Chorismate mutase 2 (265 aa).

The Chorismate mutase domain occupies glycine 10–aspartate 265.

In terms of assembly, homodimer. As to expression, expressed in roots, stems, cauline leaves and flowers, and at lower levels in rosette leaves and siliques.

It is found in the cytoplasm. The protein localises to the cytosol. The catalysed reaction is chorismate = prephenate. It participates in metabolic intermediate biosynthesis; prephenate biosynthesis; prephenate from chorismate: step 1/1. Its activity is regulated as follows. No allosteric regulation. The sequence is that of Chorismate mutase 2 from Arabidopsis thaliana (Mouse-ear cress).